The following is a 629-amino-acid chain: Long-chain-fatty-acid--AMP ligase FadD32 (629 aa).

ATP is bound by residues 186-191, Ser341, Ala345, Asp468, and Arg482; that span reads TSGSTR.

The protein belongs to the ATP-dependent AMP-binding enzyme family. Monomer.

The catalysed reaction is a long-chain fatty acid + holo-[ACP] + ATP = a long-chain fatty acyl-[ACP] + AMP + diphosphate. It carries out the reaction dodecanoate + ATP + H(+) = dodecanoyl-AMP + diphosphate. It catalyses the reaction tetradecanoate + ATP + H(+) = tetradecanoyl-AMP + diphosphate. It functions in the pathway lipid metabolism; mycolic acid biosynthesis. Its activity is regulated as follows. The acyl-AMP ligase activity is inhibited by the alkylphosphate esters of AMP, adenosine 50-dodecylphosphate (AMPC12) and eicosyl-AMP (AMPC20). Involved in the biosynthesis of mycolic acids. Catalyzes the activation of long-chain fatty acids as acyl-adenylates (acyl-AMP), which are then transferred to the phosphopantetheine arm of the polyketide synthase Pks13 for further chain extension. Can use dodecanoate (C12) and tetradecanoate (C14). The protein is Long-chain-fatty-acid--AMP ligase FadD32 (fadD32) of Mycobacterium marinum (strain ATCC BAA-535 / M).